The primary structure comprises 115 residues: Ribonuclease P protein component (115 aa).

This sequence belongs to the RnpA family. In terms of assembly, consists of a catalytic RNA component (M1 or rnpB) and a protein subunit.

It carries out the reaction Endonucleolytic cleavage of RNA, removing 5'-extranucleotides from tRNA precursor.. RNaseP catalyzes the removal of the 5'-leader sequence from pre-tRNA to produce the mature 5'-terminus. It can also cleave other RNA substrates such as 4.5S RNA. The protein component plays an auxiliary but essential role in vivo by binding to the 5'-leader sequence and broadening the substrate specificity of the ribozyme. The polypeptide is Ribonuclease P protein component (Bacillus cereus (strain 03BB102)).